A 197-amino-acid chain; its full sequence is ATP-dependent Clp protease proteolytic subunit (197 aa).

S98 acts as the Nucleophile in catalysis. H123 is a catalytic residue.

Belongs to the peptidase S14 family. In terms of assembly, fourteen ClpP subunits assemble into 2 heptameric rings which stack back to back to give a disk-like structure with a central cavity, resembling the structure of eukaryotic proteasomes.

It localises to the cytoplasm. It catalyses the reaction Hydrolysis of proteins to small peptides in the presence of ATP and magnesium. alpha-casein is the usual test substrate. In the absence of ATP, only oligopeptides shorter than five residues are hydrolyzed (such as succinyl-Leu-Tyr-|-NHMec, and Leu-Tyr-Leu-|-Tyr-Trp, in which cleavage of the -Tyr-|-Leu- and -Tyr-|-Trp bonds also occurs).. In terms of biological role, cleaves peptides in various proteins in a process that requires ATP hydrolysis. Has a chymotrypsin-like activity. Plays a major role in the degradation of misfolded proteins. In Haemophilus ducreyi (strain 35000HP / ATCC 700724), this protein is ATP-dependent Clp protease proteolytic subunit.